A 173-amino-acid chain; its full sequence is Ribosome maturation factor RimM (173 aa).

Positions Glu-78–Glu-157 constitute a PRC barrel domain. The segment at Pro-152–Pro-173 is disordered.

The protein belongs to the RimM family. In terms of assembly, binds ribosomal protein uS19.

The protein resides in the cytoplasm. In terms of biological role, an accessory protein needed during the final step in the assembly of 30S ribosomal subunit, possibly for assembly of the head region. Essential for efficient processing of 16S rRNA. May be needed both before and after RbfA during the maturation of 16S rRNA. It has affinity for free ribosomal 30S subunits but not for 70S ribosomes. This is Ribosome maturation factor RimM from Beijerinckia indica subsp. indica (strain ATCC 9039 / DSM 1715 / NCIMB 8712).